We begin with the raw amino-acid sequence, 107 residues long: Ferredoxin (107 aa).

4Fe-4S ferredoxin-type domains lie at 8–37 and 38–67; these read ERVVIDQDICISCGACVAACPYQALELDEN and GKSRLIWEKCKDDFSCVAVCPVKAISKASE. Positions 17, 20, and 23 each coordinate [4Fe-4S] cluster. Residues cysteine 27, cysteine 47, and cysteine 53 each contribute to the [3Fe-4S] cluster site. Cysteine 57 provides a ligand contact to [4Fe-4S] cluster.

Monomer. It depends on [4Fe-4S] cluster as a cofactor. Requires [3Fe-4S] cluster as cofactor. The N-terminus is blocked.

Its function is as follows. Ferredoxins are iron-sulfur proteins that transfer electrons in a wide variety of metabolic reactions. The polypeptide is Ferredoxin (Pyrobaculum islandicum (strain DSM 4184 / JCM 9189 / GEO3)).